The primary structure comprises 394 residues: Lipid-A-disaccharide synthase (394 aa).

It belongs to the LpxB family.

The enzyme catalyses 2-N,3-O-bis[(3R)-3-hydroxytetradecanoyl]-alpha-D-glucosaminyl 1-phosphate + UDP-2-N,3-O-bis[(3R)-3-hydroxytetradecanoyl]-alpha-D-glucosamine = lipid A disaccharide (E. coli) + UDP + H(+). It catalyses the reaction a lipid X + a UDP-2-N,3-O-bis[(3R)-3-hydroxyacyl]-alpha-D-glucosamine = a lipid A disaccharide + UDP + H(+). It functions in the pathway glycolipid biosynthesis; lipid IV(A) biosynthesis; lipid IV(A) from (3R)-3-hydroxytetradecanoyl-[acyl-carrier-protein] and UDP-N-acetyl-alpha-D-glucosamine: step 5/6. Condensation of UDP-2,3-diacylglucosamine and 2,3-diacylglucosamine-1-phosphate to form lipid A disaccharide, a precursor of lipid A, a phosphorylated glycolipid that anchors the lipopolysaccharide to the outer membrane of the cell. The polypeptide is Lipid-A-disaccharide synthase (Yersinia pestis).